Reading from the N-terminus, the 362-residue chain is Protein RecA (362 aa).

Residue 77 to 84 (GPESSGKT) participates in ATP binding.

Belongs to the RecA family.

It localises to the cytoplasm. Functionally, can catalyze the hydrolysis of ATP in the presence of single-stranded DNA, the ATP-dependent uptake of single-stranded DNA by duplex DNA, and the ATP-dependent hybridization of homologous single-stranded DNAs. It interacts with LexA causing its activation and leading to its autocatalytic cleavage. The sequence is that of Protein RecA from Rhizobium etli (strain CIAT 652).